The primary structure comprises 369 residues: Phospho-N-acetylmuramoyl-pentapeptide-transferase (369 aa).

10 helical membrane passes run 2–22 (IALL…TPLF), 55–75 (TVVV…MFLM), 86–106 (ALIL…DDFI), 120–140 (AKLI…LNFP), 163–183 (LAFG…NLIV), 196–216 (LDGL…LMGI), 239–259 (PLDL…FLWW), 266–286 (IFMG…FAIL), 291–311 (LLLG…IIQV), and 348–368 (ILGG…WVVL).

Belongs to the glycosyltransferase 4 family. MraY subfamily. It depends on Mg(2+) as a cofactor.

The protein localises to the cell membrane. It carries out the reaction UDP-N-acetyl-alpha-D-muramoyl-L-alanyl-gamma-D-glutamyl-meso-2,6-diaminopimeloyl-D-alanyl-D-alanine + di-trans,octa-cis-undecaprenyl phosphate = di-trans,octa-cis-undecaprenyl diphospho-N-acetyl-alpha-D-muramoyl-L-alanyl-D-glutamyl-meso-2,6-diaminopimeloyl-D-alanyl-D-alanine + UMP. It participates in cell wall biogenesis; peptidoglycan biosynthesis. Its function is as follows. Catalyzes the initial step of the lipid cycle reactions in the biosynthesis of the cell wall peptidoglycan: transfers peptidoglycan precursor phospho-MurNAc-pentapeptide from UDP-MurNAc-pentapeptide onto the lipid carrier undecaprenyl phosphate, yielding undecaprenyl-pyrophosphoryl-MurNAc-pentapeptide, known as lipid I. The protein is Phospho-N-acetylmuramoyl-pentapeptide-transferase of Pseudarthrobacter chlorophenolicus (strain ATCC 700700 / DSM 12829 / CIP 107037 / JCM 12360 / KCTC 9906 / NCIMB 13794 / A6) (Arthrobacter chlorophenolicus).